Consider the following 61-residue polypeptide: Transmembrane protein 300R (61 aa).

Transmembrane regions (helical) follow at residues 5–25 (FLDLYMILSVLAGVIGIFYLT) and 35–55 (SLSYYMTLSVVTGILALIYLQ).

It is found in the membrane. The chain is Transmembrane protein 300R from Invertebrate iridescent virus 6 (IIV-6).